Here is an 80-residue protein sequence, read N- to C-terminus: Cytochrome c oxidase subunit 7B, mitochondrial (80 aa).

The N-terminal 24 residues, 1-24 (MFPLAKNALSRLRVQSIQQAVARQ), are a transit peptide targeting the mitochondrion. Over 25 to 32 (IHQKRAPD) the chain is Mitochondrial matrix. Residues 33 to 59 (FHDKYGNAVLASGATFCVAVWVYMATQ) traverse the membrane as a helical segment. At 60 to 80 (IGIEWNPSPVGRVTPKEWREQ) the chain is on the mitochondrial intermembrane side.

Belongs to the cytochrome c oxidase VIIb family. In terms of assembly, component of the cytochrome c oxidase (complex IV, CIV), a multisubunit enzyme composed of 14 subunits. The complex is composed of a catalytic core of 3 subunits MT-CO1, MT-CO2 and MT-CO3, encoded in the mitochondrial DNA, and 11 supernumerary subunits COX4I1 (or COX4I2), COX5A, COX5B, COX6A2 (or COX6A1), COX6B1 (or COX6B2), COX6C, COX7A1 (or COX7A2), COX7B, COX7C, COX8B and NDUFA4, which are encoded in the nuclear genome. The complex exists as a monomer or a dimer and forms supercomplexes (SCs) in the inner mitochondrial membrane with NADH-ubiquinone oxidoreductase (complex I, CI) and ubiquinol-cytochrome c oxidoreductase (cytochrome b-c1 complex, complex III, CIII), resulting in different assemblies (supercomplex SCI(1)III(2)IV(1) and megacomplex MCI(2)III(2)IV(2)).

The protein localises to the mitochondrion inner membrane. It functions in the pathway energy metabolism; oxidative phosphorylation. In terms of biological role, component of the cytochrome c oxidase, the last enzyme in the mitochondrial electron transport chain which drives oxidative phosphorylation. The respiratory chain contains 3 multisubunit complexes succinate dehydrogenase (complex II, CII), ubiquinol-cytochrome c oxidoreductase (cytochrome b-c1 complex, complex III, CIII) and cytochrome c oxidase (complex IV, CIV), that cooperate to transfer electrons derived from NADH and succinate to molecular oxygen, creating an electrochemical gradient over the inner membrane that drives transmembrane transport and the ATP synthase. Cytochrome c oxidase is the component of the respiratory chain that catalyzes the reduction of oxygen to water. Electrons originating from reduced cytochrome c in the intermembrane space (IMS) are transferred via the dinuclear copper A center (CU(A)) of subunit 2 and heme A of subunit 1 to the active site in subunit 1, a binuclear center (BNC) formed by heme A3 and copper B (CU(B)). The BNC reduces molecular oxygen to 2 water molecules using 4 electrons from cytochrome c in the IMS and 4 protons from the mitochondrial matrix. Plays a role in proper central nervous system (CNS) development in vertebrates. This Bos taurus (Bovine) protein is Cytochrome c oxidase subunit 7B, mitochondrial (COX7B).